The chain runs to 1032 residues: GPI inositol-deacylase (1032 aa).

Asparagine 12 is a glycosylation site (N-linked (GlcNAc...) asparagine). A helical transmembrane segment spans residues 15-35 (ILTLVSFFGLVLFYLTWYLYT). Serine 195 is a catalytic residue. Asparagine 520 and asparagine 555 each carry an N-linked (GlcNAc...) asparagine glycan. 2 helical membrane passes run 703–723 (LATI…QVKH) and 740–760 (ICSP…TPIM). An N-linked (GlcNAc...) asparagine glycan is attached at asparagine 784. The next 3 membrane-spanning stretches (helical) occupy residues 805 to 825 (LWFI…LTFY), 861 to 880 (WANR…PIYM), and 884 to 903 (FAYV…ILVA). An N-linked (GlcNAc...) asparagine glycan is attached at asparagine 907. A helical membrane pass occupies residues 916–936 (SLLMLMLWVLPINVPILVVFV). N-linked (GlcNAc...) asparagine glycosylation is found at asparagine 938 and asparagine 942. Transmembrane regions (helical) follow at residues 943–963 (WTTP…ILLM) and 985–1005 (AFLA…TYWI).

It belongs to the GPI inositol-deacylase family.

The protein resides in the endoplasmic reticulum membrane. Functionally, involved in inositol deacylation of GPI-anchored proteins which plays important roles in the quality control and ER-associated degradation of GPI-anchored proteins. The polypeptide is GPI inositol-deacylase (BST1) (Debaryomyces hansenii (strain ATCC 36239 / CBS 767 / BCRC 21394 / JCM 1990 / NBRC 0083 / IGC 2968) (Yeast)).